The following is a 98-amino-acid chain: NADH-ubiquinone oxidoreductase chain 4L (98 aa).

A run of 3 helical transmembrane segments spans residues 1–21 (MAPI…GVLI), 28–48 (STLL…TLLI), and 59–79 (APLI…ALLV).

Belongs to the complex I subunit 4L family. As to quaternary structure, core subunit of respiratory chain NADH dehydrogenase (Complex I) which is composed of 45 different subunits.

It localises to the mitochondrion inner membrane. The enzyme catalyses a ubiquinone + NADH + 5 H(+)(in) = a ubiquinol + NAD(+) + 4 H(+)(out). In terms of biological role, core subunit of the mitochondrial membrane respiratory chain NADH dehydrogenase (Complex I) which catalyzes electron transfer from NADH through the respiratory chain, using ubiquinone as an electron acceptor. Part of the enzyme membrane arm which is embedded in the lipid bilayer and involved in proton translocation. This Perameles gunnii (Eastern barred bandicoot) protein is NADH-ubiquinone oxidoreductase chain 4L (MT-ND4L).